A 460-amino-acid polypeptide reads, in one-letter code: tRNA modification GTPase MnmE (460 aa).

(6S)-5-formyl-5,6,7,8-tetrahydrofolate-binding residues include R22, E83, and K122. The TrmE-type G domain occupies 219–381; sequence GIKTLIIGRP…LQQTILKKFQ (163 aa). N229 contributes to the K(+) binding site. Residues 229 to 234, 248 to 254, and 273 to 276 each bind GTP; these read NVGKSS, SDISGTT, and DTAG. Mg(2+) is bound at residue S233. Residues S248, I250, and T253 each contribute to the K(+) site. T254 is a binding site for Mg(2+). K460 lines the (6S)-5-formyl-5,6,7,8-tetrahydrofolate pocket.

The protein belongs to the TRAFAC class TrmE-Era-EngA-EngB-Septin-like GTPase superfamily. TrmE GTPase family. As to quaternary structure, homodimer. Heterotetramer of two MnmE and two MnmG subunits. It depends on K(+) as a cofactor.

Its subcellular location is the cytoplasm. In terms of biological role, exhibits a very high intrinsic GTPase hydrolysis rate. Involved in the addition of a carboxymethylaminomethyl (cmnm) group at the wobble position (U34) of certain tRNAs, forming tRNA-cmnm(5)s(2)U34. This is tRNA modification GTPase MnmE from Aster yellows witches'-broom phytoplasma (strain AYWB).